The primary structure comprises 171 residues: Ribosome maturation factor RimM (171 aa).

One can recognise a PRC barrel domain in the interval 96 to 170; that stretch reads AEGEYYYHEI…LVTIHVMEGL (75 aa).

Belongs to the RimM family. Binds ribosomal protein uS19.

The protein localises to the cytoplasm. An accessory protein needed during the final step in the assembly of 30S ribosomal subunit, possibly for assembly of the head region. Essential for efficient processing of 16S rRNA. May be needed both before and after RbfA during the maturation of 16S rRNA. It has affinity for free ribosomal 30S subunits but not for 70S ribosomes. The chain is Ribosome maturation factor RimM from Bacillus mycoides (strain KBAB4) (Bacillus weihenstephanensis).